Reading from the N-terminus, the 354-residue chain is Ion-translocating oxidoreductase complex subunit D (354 aa).

Helical transmembrane passes span 19–39 (IMLW…YYFG), 40–60 (FGVL…EFLV), 70–89 (FYIS…VAIP), 94–116 (YWII…GGLG), and 123–143 (AMVG…TWLA). Threonine 186 carries the post-translational modification FMN phosphoryl threonine. Transmembrane regions (helical) follow at residues 215–235 (LAGL…LFLV), 242–262 (WQIP…SWLF), 266–286 (MPSP…FFIA), 300–320 (LVFG…GGYP), and 321–341 (DGAA…DQYT).

It belongs to the NqrB/RnfD family. In terms of assembly, the complex is composed of six subunits: RnfA, RnfB, RnfC, RnfD, RnfE and RnfG. Requires FMN as cofactor.

It is found in the cell inner membrane. In terms of biological role, part of a membrane-bound complex that couples electron transfer with translocation of ions across the membrane. This is Ion-translocating oxidoreductase complex subunit D from Mannheimia succiniciproducens (strain KCTC 0769BP / MBEL55E).